The primary structure comprises 266 residues: Glucosamine-6-phosphate deaminase 1 (266 aa).

Residue aspartate 67 is the Proton acceptor; for enolization step of the active site. Catalysis depends on asparagine 136, which acts as the For ring-opening step. Histidine 138 serves as the catalytic Proton acceptor; for ring-opening step. Glutamate 143 (for ring-opening step) is an active-site residue.

Belongs to the glucosamine/galactosamine-6-phosphate isomerase family. Homohexamer.

It is found in the cytoplasm. The catalysed reaction is alpha-D-glucosamine 6-phosphate + H2O = beta-D-fructose 6-phosphate + NH4(+). Its function is as follows. Catalyzes the reversible conversion of alpha-D-glucosamine 6-phosphate (GlcN-6P) into beta-D-fructose 6-phosphate (Fru-6P) and ammonium ion, a regulatory reaction step in de novo uridine diphosphate-N-acetyl-alpha-D-glucosamine (UDP-GlcNAc) biosynthesis via hexosamine pathway. The protein is Glucosamine-6-phosphate deaminase 1 (GPI1) of Giardia intestinalis (Giardia lamblia).